The primary structure comprises 89 residues: MTEKLNEIVVRKTKNVEDHVLDVIVLFNQGIDEVILKGIGREISKAVDVYNSLKDRLGDGIQLVNVQTGSEVRDRRRISYILLRLKRVY.

Position 12 is an N6-acetyllysine (Lys-12).

Belongs to the histone-like Alba family. In terms of processing, acetylated. Acetylation at Lys-12 decreases DNA-binding affinity.

It localises to the cytoplasm. The protein resides in the chromosome. Functionally, binds double-stranded DNA tightly but without sequence specificity. Involved in DNA compaction. This Saccharolobus shibatae (strain ATCC 51178 / DSM 5389 / JCM 8931 / NBRC 15437 / B12) (Sulfolobus shibatae) protein is DNA/RNA-binding protein Alba 2.